A 1507-amino-acid chain; its full sequence is DE-cadherin (1507 aa).

The N-terminal stretch at 1-69 is a signal peptide; that stretch reads MSTSVQRMSR…AISLLSPALA (69 aa). The propeptide occupies 70–261; that stretch reads LHSPPDKNFS…IYLKRPIDKR (192 aa). Cadherin domains lie at 97–195, 204–301, 311–412, 420–522, 532–633, 631–733, and 741–835; these read VKEE…APAF, MSEN…PPSF, LKEN…IPYY, ILEN…KPHF, LLED…TILE, ILEE…APFL, and WQEN…NDNA. The Extracellular portion of the chain corresponds to 262 to 1328; that stretch reads PGQSYAIIVR…VAFSFGIDRN (1067 aa). 3 N-linked (GlcNAc...) asparagine glycosylation sites follow: Asn-317, Asn-466, and Asn-552. Asn-766, Asn-949, Asn-983, Asn-999, and Asn-1073 each carry an N-linked (GlcNAc...) asparagine glycan. Positions 1084–1123 constitute an EGF-like domain; it reads VQAQCVCEAPLMRRCLNGGSPRYGENDVCDCIDGFTGPHC. 2 cysteine pairs are disulfide-bonded: Cys-1098/Cys-1112 and Cys-1114/Cys-1123. The region spanning 1125 to 1313 is the Laminin G-like domain; it reads LVSVAFYGSG…SVFRNIDSGC (189 aa). 3 N-linked (GlcNAc...) asparagine glycosylation sites follow: Asn-1145, Asn-1274, and Asn-1290. Cysteines 1287 and 1313 form a disulfide. A helical membrane pass occupies residues 1329-1349; the sequence is FIIAIIVCLALLLIILLAVVV. Topologically, residues 1350–1507 are cytoplasmic; the sequence is QKKQKNGWHE…NVDDDQGWRI (158 aa). Residues 1350–1507 are interaction with Inx2; it reads QKKQKNGWHE…NVDDDQGWRI (158 aa). Residues 1488–1507 form a disordered region; the sequence is YGEEPSDTDSNVDDDQGWRI. Ser-1493 carries the post-translational modification Phosphoserine.

Interacts (via cytoplasmic region) with Inx2 (via cytoplasmic loop). Interacts with Hakai. Interacts with Myo31DF. In terms of processing, N-glycosylation is important for biosynthesis and function. As to expression, in early stage 9 and stage 10 oocytes, expressed in border cells, strongly expressed in polar cells and very weakly expressed in the nurse cells (at protein level). In the embryo, expressed in the leading edge cells of the dorsal epidermis (at protein level). Stage 10 embryos exhibit intense expression in epithelial cells. Stage 14 embryos show expression in the hindgut (at the apical poles of cell-cell boundaries), at the apical junctions of tracheal cells and in the dorsal longitudinal trunk. In stage 16 embryos the glial midline cells of the central nervous system show strong expression.

It localises to the cell membrane. Its subcellular location is the apical cell membrane. Its function is as follows. Cadherins are calcium-dependent cell adhesion proteins. In connecting cells they preferentially interact with themselves in a homophilic manner; cadherins may thus contribute to the sorting of heterogeneous cell types. During oogenesis, integral component of the guidance mechanisms that regulate the directional persistent collective migration of the border cell (BC) cluster through the nurse cells to the oocyte. Functions downstream of the two chemoattractant receptors, Pvr and Egfr, to promote BC adhesion between the leader cells of the migrating cluster and the surrounding nurse cells. This adhesion increases Rac1 signaling in the leading cells, which in turn stabilizes DE-cadherin/DE-cadherin adhesions through the formation of forward-directed protrusions which attach/detach to the surrounding nurse cells in order to pull the cluster through the egg chamber to the oocyte. Within the BC cluster, also promotes adhesion between BCs, and between BCs and polar cells which enables the lead BC to communicate direction to the other cells in the cluster, providing polarity to each individual cell and ensuring collective behavior. May function in cell intercalation in the lateral epidermis during germband extension. Contributes to the determination of body left-right asymmetry by enhancing Myo31DF activity and inhibiting Myo61F activity. The sequence is that of DE-cadherin from Drosophila melanogaster (Fruit fly).